Here is a 1199-residue protein sequence, read N- to C-terminus: MLDVNNFEYMNIGLASPDKIRSWSFGEVKKPETINYRTLKPEKDGLFCERIFGPTKDWECHCGKYKRVRYKGVVCDRCGVEVTRAKVRRERMGHIELAAPVSHIWYFKGIPSRMGLVLDMSPRALEEVIYFASYVVTDPANTPLEKKQLLSEKEYRAYLDKYGNKFQASMGAEAINKLLQDIDLVKEVDMLKEELKTSQGQRRTRAIKRLEVLEAFRNSGNKPSWMILDVLPVIPPELRPMVQLDGGRFATSDLNDLYRRVINRNNRLKRLLDLGAPSIIVQNEKRMLQEAVDALIDNGRRGRPVTGPGNRPLKSLSHMLKGKQGRFRQNLLGKRVDYSGRSVIVVGPHLKMYQCGLPKEMALELFKPFVMKELVEKGLAHNIKSAKRKIERVQPEVWDVLESVIKEHPVLLNRAPTLHRLGIQAFEPTLVEGRAIRLHPLVCTAYNADFDGDQMAVHVPLSAEAQAEARILMLAAQNILNPKDGKPVVTPSQDMVLGNYYLTLERAGAVGEGMVFKNTDEALLAYQNGYVHLHTRVAVAANSLKNVTFTEEQRSKLLITTVGKLVFNEILPESFPYMNEPTKSNIEEKTPDRFFLDKGADVKAVIAEQPINAPFKKGILGKIIAEIFKRFHITETSKMLDRMKNLGFRYSTKAGITVGVSDIVVLDDKQEILEEAQSKVDNVLKQFRRGLITEEERYERVISIWSSAKDVIQGKLMKSLDEVNPIYMMSDSGARGNASNFTQLAGMRGLMANPAGRIIELPIKSSFREGLTVLEYFISTHGARKGLADTALKTADSGYLTRRLVDVAQDVIIRETDCGTDRGILAKPLKEGTEIIERLEERLIGRFARKQIKHPETGAVLINENELIDEDKALEIVEAGIEEVWIRSAFTCNTPHGVCKRCYGRNLATGTDVEVGEAVGIIAAQSIGEPGTQLTMRTFHTGGVAGDDITQGLPRIQELFEARNPKGQATISEIDGTIAEINEVRDKQQEIVVQGAVETRSYTAPYNSRLKVAEGDQITRGQVLTEGSIDPKELLKVTDLTTVQEYLLHEVQKVYRMQGVEIGDKHVEVMVRQMLRKVRVIDAGDTDVLPGTLLDIHQFTEANKKVLLEGNRPATGRPVLLGITKASLETDSFLSAASFQETTRVLTDAAIKGKRDELLGLKENVIIGKLVPAGTGMMNYRKVKPVSNVQPTEDMVPAE.

4 residues coordinate Zn(2+): C60, C62, C75, and C78. Residues D449, D451, and D453 each contribute to the Mg(2+) site. 4 residues coordinate Zn(2+): C818, C892, C899, and C902.

The protein belongs to the RNA polymerase beta' chain family. The RNAP catalytic core consists of 2 alpha, 1 beta, 1 beta' and 1 omega subunit. When a sigma factor is associated with the core the holoenzyme is formed, which can initiate transcription. Mg(2+) is required as a cofactor. It depends on Zn(2+) as a cofactor.

The catalysed reaction is RNA(n) + a ribonucleoside 5'-triphosphate = RNA(n+1) + diphosphate. Functionally, DNA-dependent RNA polymerase catalyzes the transcription of DNA into RNA using the four ribonucleoside triphosphates as substrates. This Bacillus velezensis (strain DSM 23117 / BGSC 10A6 / LMG 26770 / FZB42) (Bacillus amyloliquefaciens subsp. plantarum) protein is DNA-directed RNA polymerase subunit beta'.